The primary structure comprises 50 residues: Large ribosomal subunit protein bL33 (50 aa).

It belongs to the bacterial ribosomal protein bL33 family.

The polypeptide is Large ribosomal subunit protein bL33 (Fusobacterium nucleatum subsp. nucleatum (strain ATCC 25586 / DSM 15643 / BCRC 10681 / CIP 101130 / JCM 8532 / KCTC 2640 / LMG 13131 / VPI 4355)).